The sequence spans 349 residues: Putative transport protein jhp_0514 (349 aa).

8 helical membrane passes run 6–26, 27–47, 56–76, 143–163, 195–215, 224–244, 258–278, and 300–320; these read FFWI…QDFL, MDAL…VFLN, SFLC…FIVY, LKLV…FYYG, VLLT…TMII, LGIL…LIWI, EAIF…DSVI, and ILIF…GIIV.

It belongs to the autoinducer-2 exporter (AI-2E) (TC 2.A.86) family.

The protein resides in the cell membrane. This chain is Putative transport protein jhp_0514, found in Helicobacter pylori (strain J99 / ATCC 700824) (Campylobacter pylori J99).